The primary structure comprises 308 residues: Aspartate carbamoyltransferase catalytic subunit (308 aa).

Residues Arg-59 and Thr-60 each coordinate carbamoyl phosphate. Lys-87 lines the L-aspartate pocket. 3 residues coordinate carbamoyl phosphate: Arg-109, His-137, and Gln-140. Residues Arg-170 and Arg-224 each contribute to the L-aspartate site. The carbamoyl phosphate site is built by Gly-265 and Pro-266.

The protein belongs to the aspartate/ornithine carbamoyltransferase superfamily. ATCase family. As to quaternary structure, heterododecamer (2C3:3R2) of six catalytic PyrB chains organized as two trimers (C3), and six regulatory PyrI chains organized as three dimers (R2).

The catalysed reaction is carbamoyl phosphate + L-aspartate = N-carbamoyl-L-aspartate + phosphate + H(+). Its pathway is pyrimidine metabolism; UMP biosynthesis via de novo pathway; (S)-dihydroorotate from bicarbonate: step 2/3. Catalyzes the condensation of carbamoyl phosphate and aspartate to form carbamoyl aspartate and inorganic phosphate, the committed step in the de novo pyrimidine nucleotide biosynthesis pathway. The polypeptide is Aspartate carbamoyltransferase catalytic subunit (Flavobacterium johnsoniae (strain ATCC 17061 / DSM 2064 / JCM 8514 / BCRC 14874 / CCUG 350202 / NBRC 14942 / NCIMB 11054 / UW101) (Cytophaga johnsonae)).